Reading from the N-terminus, the 148-residue chain is Large ribosomal subunit protein bL9 (148 aa).

This sequence belongs to the bacterial ribosomal protein bL9 family.

Functionally, binds to the 23S rRNA. The sequence is that of Large ribosomal subunit protein bL9 from Pseudomonas putida (strain W619).